A 63-amino-acid polypeptide reads, in one-letter code: UPF0391 membrane protein lpg2415 (63 aa).

2 helical membrane passes run 4-24 (WALIFLIVAIVAGLFGFRGVA) and 33-53 (VLFFLFIVMFIVLLVFSLLGG).

It belongs to the UPF0391 family.

The protein resides in the cell membrane. This is UPF0391 membrane protein lpg2415 from Legionella pneumophila subsp. pneumophila (strain Philadelphia 1 / ATCC 33152 / DSM 7513).